The chain runs to 76 residues: Liver-expressed antimicrobial peptide 2 (76 aa).

Residues 1 to 22 (MLQLKLFAVLLTCLLLLGQVNS) form the signal peptide. Positions 23-36 (SPVPEVSSAKRSRR) are excised as a propeptide. 2 disulfide bridges follow: Cys53–Cys64 and Cys59–Cys69.

This sequence belongs to the LEAP2 family.

Its subcellular location is the secreted. Its function is as follows. Has an antimicrobial activity. This is Liver-expressed antimicrobial peptide 2 (Leap2) from Mus musculus (Mouse).